Here is a 194-residue protein sequence, read N- to C-terminus: Dihydrofolate reductase HdrB (194 aa).

In terms of domain architecture, DHFR spans 18–194 (RFVLVAAVAD…ADRGAEESDE (177 aa)). Residues alanine 24 and 30–36 (VIGRDGT) each bind NADP(+). Aspartate 44 is a binding site for substrate. 62–63 (KT) provides a ligand contact to NADP(+). Residues arginine 69 and arginine 78 each coordinate substrate. NADP(+) contacts are provided by residues 84–85 (TT) and 123–130 (GGATVYEQ). Threonine 141 lines the substrate pocket. The disordered stretch occupies residues 173 to 194 (SFVTYERKQPAAADRGAEESDE).

Belongs to the dihydrofolate reductase family.

The enzyme catalyses (6S)-5,6,7,8-tetrahydrofolate + NADP(+) = 7,8-dihydrofolate + NADPH + H(+). The protein operates within cofactor biosynthesis; tetrahydrofolate biosynthesis; 5,6,7,8-tetrahydrofolate from 7,8-dihydrofolate: step 1/1. Its activity is regulated as follows. Maximum activity at KCl concentration of 0.5 M and activity decreases with increasing concentration of KCl. In terms of biological role, key enzyme in folate metabolism. Catalyzes an essential reaction for de novo glycine and purine synthesis, and for DNA precursor synthesis. This is Dihydrofolate reductase HdrB (hdrB) from Haloferax volcanii (Halobacterium volcanii).